The sequence spans 599 residues: Aspartate--tRNA(Asp/Asn) ligase (599 aa).

Residue Glu-174 participates in L-aspartate binding. The segment at 198–201 (QLFK) is aspartate. An L-aspartate-binding site is contributed by Arg-220. Residues 220–222 (RDE) and Gln-229 each bind ATP. His-457 is an L-aspartate binding site. Residue Glu-491 coordinates ATP. Arg-498 contributes to the L-aspartate binding site. 543–546 (GLDR) contacts ATP.

This sequence belongs to the class-II aminoacyl-tRNA synthetase family. Type 1 subfamily. In terms of assembly, homodimer.

It localises to the cytoplasm. It carries out the reaction tRNA(Asx) + L-aspartate + ATP = L-aspartyl-tRNA(Asx) + AMP + diphosphate. Aspartyl-tRNA synthetase with relaxed tRNA specificity since it is able to aspartylate not only its cognate tRNA(Asp) but also tRNA(Asn). Reaction proceeds in two steps: L-aspartate is first activated by ATP to form Asp-AMP and then transferred to the acceptor end of tRNA(Asp/Asn). The sequence is that of Aspartate--tRNA(Asp/Asn) ligase from Paraburkholderia xenovorans (strain LB400).